Reading from the N-terminus, the 64-residue chain is Large ribosomal subunit protein bL35 (64 aa).

Belongs to the bacterial ribosomal protein bL35 family.

The chain is Large ribosomal subunit protein bL35 from Pseudomonas entomophila (strain L48).